The sequence spans 397 residues: S-adenosylmethionine synthase (397 aa).

An ATP-binding site is contributed by His17. Asp19 contacts Mg(2+). Glu45 lines the K(+) pocket. The L-methionine site is built by Glu58 and Gln101. Residues 101–111 (QSPDIAQGVDK) form a flexible loop region. Residues 176-178 (DGK), 243-244 (RF), Asp252, 258-259 (RK), and Lys279 contribute to the ATP site. Asp252 is a binding site for L-methionine. Lys283 serves as a coordination point for L-methionine.

The protein belongs to the AdoMet synthase family. Homotetramer; dimer of dimers. It depends on Mg(2+) as a cofactor. K(+) is required as a cofactor.

The protein localises to the cytoplasm. It catalyses the reaction L-methionine + ATP + H2O = S-adenosyl-L-methionine + phosphate + diphosphate. It participates in amino-acid biosynthesis; S-adenosyl-L-methionine biosynthesis; S-adenosyl-L-methionine from L-methionine: step 1/1. Its function is as follows. Catalyzes the formation of S-adenosylmethionine (AdoMet) from methionine and ATP. The overall synthetic reaction is composed of two sequential steps, AdoMet formation and the subsequent tripolyphosphate hydrolysis which occurs prior to release of AdoMet from the enzyme. This Staphylococcus aureus (strain MRSA252) protein is S-adenosylmethionine synthase.